The chain runs to 345 residues: Uroporphyrinogen decarboxylase (345 aa).

Substrate contacts are provided by residues 27–31, Phe46, Asp76, Tyr152, Ser207, and His320; that span reads RQAGR.

Belongs to the uroporphyrinogen decarboxylase family. In terms of assembly, homodimer.

It localises to the cytoplasm. The catalysed reaction is uroporphyrinogen III + 4 H(+) = coproporphyrinogen III + 4 CO2. Its pathway is porphyrin-containing compound metabolism; protoporphyrin-IX biosynthesis; coproporphyrinogen-III from 5-aminolevulinate: step 4/4. Functionally, catalyzes the decarboxylation of four acetate groups of uroporphyrinogen-III to yield coproporphyrinogen-III. The sequence is that of Uroporphyrinogen decarboxylase from Geobacillus kaustophilus (strain HTA426).